Reading from the N-terminus, the 505-residue chain is Putative F-box protein At1g58310 (505 aa).

One can recognise an F-box domain in the interval 7-55; sequence RDIISGLPDSLLCHILSFLNTKEAASTSVLAKKWRYLFASVPNLDFDDS.

This is Putative F-box protein At1g58310 from Arabidopsis thaliana (Mouse-ear cress).